The chain runs to 179 residues: Large ribosomal subunit protein uL5 (179 aa).

The protein belongs to the universal ribosomal protein uL5 family. In terms of assembly, part of the 50S ribosomal subunit; part of the 5S rRNA/L5/L18/L25 subcomplex. Contacts the 5S rRNA and the P site tRNA. Forms a bridge to the 30S subunit in the 70S ribosome.

Functionally, this is one of the proteins that bind and probably mediate the attachment of the 5S RNA into the large ribosomal subunit, where it forms part of the central protuberance. In the 70S ribosome it contacts protein S13 of the 30S subunit (bridge B1b), connecting the 2 subunits; this bridge is implicated in subunit movement. Contacts the P site tRNA; the 5S rRNA and some of its associated proteins might help stabilize positioning of ribosome-bound tRNAs. This is Large ribosomal subunit protein uL5 from Herminiimonas arsenicoxydans.